The following is a 221-amino-acid chain: PKHD-type hydroxylase P9515_13321 (221 aa).

Residues 80-174 (TIHGIMFTKS…RLVCVGWIES (95 aa)) form the Fe2OG dioxygenase domain. Positions 98, 100, and 155 each coordinate Fe cation. Residue Arg165 coordinates 2-oxoglutarate.

It depends on Fe(2+) as a cofactor. L-ascorbate is required as a cofactor.

This is PKHD-type hydroxylase P9515_13321 from Prochlorococcus marinus (strain MIT 9515).